Reading from the N-terminus, the 185-residue chain is Ribosome-recycling factor (185 aa).

Belongs to the RRF family.

It localises to the cytoplasm. Its function is as follows. Responsible for the release of ribosomes from messenger RNA at the termination of protein biosynthesis. May increase the efficiency of translation by recycling ribosomes from one round of translation to another. The protein is Ribosome-recycling factor of Finegoldia magna (strain ATCC 29328 / DSM 20472 / WAL 2508) (Peptostreptococcus magnus).